Reading from the N-terminus, the 127-residue chain is Methylglyoxal synthase (127 aa).

The MGS-like domain maps to 1-127; it reads MEKKIALIAH…IKGLESLILR (127 aa). Substrate contacts are provided by residues His-10, Lys-14, 36–39, and 56–57; these read TGTT and SG. The active-site Proton donor/acceptor is the Asp-62. Residue His-89 coordinates substrate.

Belongs to the methylglyoxal synthase family.

It catalyses the reaction dihydroxyacetone phosphate = methylglyoxal + phosphate. In terms of biological role, catalyzes the formation of methylglyoxal from dihydroxyacetone phosphate. In Borreliella afzelii (strain PKo) (Borrelia afzelii), this protein is Methylglyoxal synthase.